A 354-amino-acid polypeptide reads, in one-letter code: Glutamine synthetase (354 aa).

A GS beta-grasp domain is found at 22-101; the sequence is IQAEYVWVDG…VLAETYNSDG (80 aa). The GS catalytic domain maps to 108–354; the sequence is FRHHAAKVME…IIVETTLLNA (247 aa).

The protein belongs to the glutamine synthetase family. Homooctamer.

It is found in the cytoplasm. It catalyses the reaction L-glutamate + NH4(+) + ATP = L-glutamine + ADP + phosphate + H(+). The sequence is that of Glutamine synthetase (GLN1) from Hebeloma cylindrosporum.